The sequence spans 379 residues: NADH-rubredoxin oxidoreductase (379 aa).

Intrachain disulfides connect C26/C286 and C137/C216. Residues 33–35 (NSE), R42, A79, and Y125 contribute to the FAD site. D259 is an FAD binding site.

This sequence belongs to the FAD-dependent oxidoreductase family. As to quaternary structure, monomer. Requires FAD as cofactor.

The catalysed reaction is 2 reduced [rubredoxin] + NAD(+) + H(+) = 2 oxidized [rubredoxin] + NADH. In terms of biological role, catalyzes the NADH-dependent reduction of rubredoxin (Rd). NADPH is a very poor electron donor compared to NADH. Functions as an intermediate component in the electron transfer chain: NADH-&gt;NROR-&gt;Rd-&gt;FprA1/2. Also functions as an intermediate component in the electron transfer chains from NADH to revRbr and Dfx. Therefore, is a key electron carrier in an efficient multienzyme complex that can scavenge O(2) and reactive oxygen species (ROS), and thus plays an important role in the oxidative stress defense system in C.acetobutylicum, an obligate anaerobic bacterium. The protein is NADH-rubredoxin oxidoreductase (nroR) of Clostridium acetobutylicum (strain ATCC 824 / DSM 792 / JCM 1419 / IAM 19013 / LMG 5710 / NBRC 13948 / NRRL B-527 / VKM B-1787 / 2291 / W).